A 198-amino-acid chain; its full sequence is Na(+)-translocating NADH-quinone reductase subunit E (198 aa).

Transmembrane regions (helical) follow at residues 11–31 (AVFVENMALAFFLGMCTFLAV), 35–55 (VSTAFGLGIAVTVVLGISVPA), 77–97 (FLNFITFIGVIAAIVQVLEMI), 109–129 (LGIFLPLITVNCAIFGGVSFM), 140–160 (IVYGFGSGMGWMLAIVALAGI), and 176–196 (LGITFISTGLMALGFMSFAGV).

It belongs to the NqrDE/RnfAE family. Composed of six subunits; NqrA, NqrB, NqrC, NqrD, NqrE and NqrF.

Its subcellular location is the cell inner membrane. The enzyme catalyses a ubiquinone + n Na(+)(in) + NADH + H(+) = a ubiquinol + n Na(+)(out) + NAD(+). Its function is as follows. NQR complex catalyzes the reduction of ubiquinone-1 to ubiquinol by two successive reactions, coupled with the transport of Na(+) ions from the cytoplasm to the periplasm. NqrA to NqrE are probably involved in the second step, the conversion of ubisemiquinone to ubiquinol. This chain is Na(+)-translocating NADH-quinone reductase subunit E, found in Yersinia pestis bv. Antiqua (strain Nepal516).